The following is a 422-amino-acid chain: Interleukin-11 receptor subunit alpha (422 aa).

The first 22 residues, 1–22 (MSSSCSGLSRVLVAVATALVSA), serve as a signal peptide directing secretion. At 24–370 (SPCPQAWGPP…DSVEQVAVLV (347 aa)) the chain is on the extracellular side. The Ig-like C2-type domain occupies 27 to 110 (PQAWGPPGVQ…LGGTVTLQLG (84 aa)). 3 cysteine pairs are disulfide-bonded: C48–C94, C120–C130, and C170–C180. Fibronectin type-III domains follow at residues 112–219 (PPAR…LRPD) and 220–317 (PPQG…TPST). N127 carries N-linked (GlcNAc...) asparagine glycosylation. N194 is a glycosylation site (N-linked (GlcNAc...) asparagine). The WSXWS motif motif lies at 304–308 (WSTWS). The segment at 335 to 355 (EVEPQVDSPAPPRPSLQPHPR) is disordered. A helical transmembrane segment spans residues 371–391 (SLGILSFLGLVAGALALGLWL). The Cytoplasmic segment spans residues 392–422 (RLRRGGKDGSPKPGFLASVIPVDRHPGAPNL).

Belongs to the type I cytokine receptor family. Type 3 subfamily. As to quaternary structure, on IL11 binding, forms a multimer complex with IL6ST/gp130. A short soluble form is also released from the membrane by proteolysis. The sIL11RA is formed either by limited proteolysis of membrane-bound receptors, a process referred to as ectodomain shedding, or directly secreted from the cells after alternative mRNA splicing. mIL11RA is cleaved by the proteases ADAM10, ELANE and PRTN3.

The protein resides in the membrane. It localises to the secreted. In terms of biological role, receptor for interleukin-11 (IL11). The receptor systems for IL6, LIF, OSM, CNTF, IL11 and CT1 can utilize IL6ST for initiating signal transmission. The IL11/IL11RA/IL6ST complex may be involved in the control of proliferation and/or differentiation of skeletogenic progenitor or other mesenchymal cells. Essential for the normal development of craniofacial bones and teeth. Restricts suture fusion and tooth number. Soluble form of IL11 receptor (sIL11RA) that acts as an agonist of IL11 activity. The IL11:sIL11RA complex binds to IL6ST/gp130 on cell surfaces and induces signaling also on cells that do not express membrane-bound IL11RA in a process called IL11 trans-signaling. This is Interleukin-11 receptor subunit alpha (IL11RA) from Pongo abelii (Sumatran orangutan).